The primary structure comprises 218 residues: Small ribosomal subunit protein uS3c (218 aa).

A KH type-2 domain is found at 43 to 118 (IKNYVQKNTR…KLNIAITRIG (76 aa)).

The protein belongs to the universal ribosomal protein uS3 family. As to quaternary structure, part of the 30S ribosomal subunit.

The protein resides in the plastid. Its subcellular location is the chloroplast. This is Small ribosomal subunit protein uS3c (rps3) from Gossypium barbadense (Sea Island cotton).